The chain runs to 450 residues: Phosphoglucosamine mutase (450 aa).

The active-site Phosphoserine intermediate is the Ser-97. Residues Ser-97, Asp-236, Asp-238, and Asp-240 each coordinate Mg(2+). The residue at position 97 (Ser-97) is a Phosphoserine.

The protein belongs to the phosphohexose mutase family. The cofactor is Mg(2+). In terms of processing, activated by phosphorylation.

The catalysed reaction is alpha-D-glucosamine 1-phosphate = D-glucosamine 6-phosphate. Catalyzes the conversion of glucosamine-6-phosphate to glucosamine-1-phosphate. The sequence is that of Phosphoglucosamine mutase from Prochlorococcus marinus (strain MIT 9312).